The sequence spans 115 residues: UPF0102 protein SYO3AOP1_0546 (115 aa).

This sequence belongs to the UPF0102 family.

This Sulfurihydrogenibium sp. (strain YO3AOP1) protein is UPF0102 protein SYO3AOP1_0546.